The following is a 203-amino-acid chain: Probable cytochrome c oxidase subunit 3 (203 aa).

5 helical membrane-spanning segments follow: residues 30–50 (IIWL…YFVA), 69–89 (LAVP…MGVF), 102–122 (WYFI…YEYY), 142–162 (ITTG…VFLL), and 179–199 (IVVS…FATI).

This sequence belongs to the cytochrome c oxidase subunit 3 family.

Its subcellular location is the cell membrane. The enzyme catalyses 4 Fe(II)-[cytochrome c] + O2 + 8 H(+)(in) = 4 Fe(III)-[cytochrome c] + 2 H2O + 4 H(+)(out). The polypeptide is Probable cytochrome c oxidase subunit 3 (ctaE) (Nocardia farcinica (strain IFM 10152)).